We begin with the raw amino-acid sequence, 387 residues long: 3-ketoacyl-CoA thiolase (387 aa).

Cys91 acts as the Acyl-thioester intermediate in catalysis. Residues His343 and Cys373 each act as proton acceptor in the active site.

It belongs to the thiolase-like superfamily. Thiolase family. In terms of assembly, heterotetramer of two alpha chains (FadB) and two beta chains (FadA).

It is found in the cytoplasm. The enzyme catalyses an acyl-CoA + acetyl-CoA = a 3-oxoacyl-CoA + CoA. It participates in lipid metabolism; fatty acid beta-oxidation. Catalyzes the final step of fatty acid oxidation in which acetyl-CoA is released and the CoA ester of a fatty acid two carbons shorter is formed. The protein is 3-ketoacyl-CoA thiolase of Escherichia fergusonii (strain ATCC 35469 / DSM 13698 / CCUG 18766 / IAM 14443 / JCM 21226 / LMG 7866 / NBRC 102419 / NCTC 12128 / CDC 0568-73).